The following is a 39-amino-acid chain: MERNQNPNRQPVELNRTSLYLGLLLIAVLGILFSSYFFN.

A helical membrane pass occupies residues S18–F38.

Belongs to the PsbL family. PSII is composed of 1 copy each of membrane proteins PsbA, PsbB, PsbC, PsbD, PsbE, PsbF, PsbH, PsbI, PsbJ, PsbK, PsbL, PsbM, PsbT, PsbX, PsbY, PsbZ, Psb30/Ycf12, peripheral proteins PsbO, CyanoQ (PsbQ), PsbU, PsbV and a large number of cofactors. It forms dimeric complexes.

It localises to the cellular thylakoid membrane. Its function is as follows. One of the components of the core complex of photosystem II (PSII). PSII is a light-driven water:plastoquinone oxidoreductase that uses light energy to abstract electrons from H(2)O, generating O(2) and a proton gradient subsequently used for ATP formation. It consists of a core antenna complex that captures photons, and an electron transfer chain that converts photonic excitation into a charge separation. This subunit is found at the monomer-monomer interface and is required for correct PSII assembly and/or dimerization. This Picosynechococcus sp. (strain ATCC 27264 / PCC 7002 / PR-6) (Agmenellum quadruplicatum) protein is Photosystem II reaction center protein L.